The primary structure comprises 131 residues: Large ribosomal subunit protein bL12 (131 aa).

It belongs to the bacterial ribosomal protein bL12 family. As to quaternary structure, homodimer. Part of the ribosomal stalk of the 50S ribosomal subunit. Forms a multimeric L10(L12)X complex, where L10 forms an elongated spine to which 2 to 4 L12 dimers bind in a sequential fashion. Binds GTP-bound translation factors.

In terms of biological role, forms part of the ribosomal stalk which helps the ribosome interact with GTP-bound translation factors. Is thus essential for accurate translation. The chain is Large ribosomal subunit protein bL12 from Prochlorococcus marinus (strain MIT 9215).